We begin with the raw amino-acid sequence, 185 residues long: MATTNDLKNGMVLNLDGELWAVVEFQHVKPGKGGAFVRTTLKNVLSGKVVDKTFNAGTKVDTATVDKRTMQYLYADGEDYVFMDLETFDQITVLGDTVGEAANYLLPEAEAVVATHESVPLYVELPTSVVLEVTYTEPGLQGDRSTGGSKPATVETGATVQVPLFITTGEKIKVDTRDGRYLGRA.

This sequence belongs to the elongation factor P family.

Its subcellular location is the cytoplasm. The protein operates within protein biosynthesis; polypeptide chain elongation. Its function is as follows. Involved in peptide bond synthesis. Stimulates efficient translation and peptide-bond synthesis on native or reconstituted 70S ribosomes in vitro. Probably functions indirectly by altering the affinity of the ribosome for aminoacyl-tRNA, thus increasing their reactivity as acceptors for peptidyl transferase. The chain is Elongation factor P from Salinispora arenicola (strain CNS-205).